Consider the following 83-residue polypeptide: Delta-conotoxin-like MVIC (83 aa).

The N-terminal stretch at 1–22 (MKLTCVMIVAVLFLTTWTFVTA) is a signal peptide. The propeptide occupies 23–49 (DDSRYGLKNLFPKARHEMKNPEASKLN). Intrachain disulfides connect Cys54–Cys69, Cys61–Cys73, and Cys68–Cys78. 4-hydroxyproline occurs at positions 56 and 65.

The protein belongs to the conotoxin O1 superfamily. In terms of tissue distribution, expressed by the venom duct.

Its subcellular location is the secreted. In terms of biological role, delta-conotoxins bind to site 6 of voltage-gated sodium channels (Nav) and inhibit the inactivation process. The chain is Delta-conotoxin-like MVIC from Conus magus (Magical cone).